A 203-amino-acid chain; its full sequence is MSQLTLTLLMIVAAYLAGSVSSAVLVCRMRGLPDPRLQGSGNPGATNVLRIGGASSAAMVLFFDMLKGALPTYLAYLMGIDAISLGLIAIAACLGHIYPIFFGFKGGKGVATAFGAMAPIGDDLAICLMASWVVLVLISRYSSLAAIITALLAPLYTWWLDDRFTIPVAMLSTLIIIRHKENIQRLLKGEESKVSRKKRPKAP.

The next 4 membrane-spanning stretches (helical) occupy residues 6 to 26 (LTLL…AVLV), 82 to 102 (AISL…PIFF), 118 to 138 (APIG…LVLI), and 141 to 161 (YSSL…WWLD).

The protein belongs to the PlsY family. In terms of assembly, probably interacts with PlsX.

The protein localises to the cell inner membrane. It carries out the reaction an acyl phosphate + sn-glycerol 3-phosphate = a 1-acyl-sn-glycero-3-phosphate + phosphate. Its pathway is lipid metabolism; phospholipid metabolism. In terms of biological role, catalyzes the transfer of an acyl group from acyl-phosphate (acyl-PO(4)) to glycerol-3-phosphate (G3P) to form lysophosphatidic acid (LPA). This enzyme utilizes acyl-phosphate as fatty acyl donor, but not acyl-CoA or acyl-ACP. In Shewanella sp. (strain ANA-3), this protein is Glycerol-3-phosphate acyltransferase.